Here is a 152-residue protein sequence, read N- to C-terminus: Ribosome maturation factor RimP (152 aa).

Belongs to the RimP family.

Its subcellular location is the cytoplasm. In terms of biological role, required for maturation of 30S ribosomal subunits. The polypeptide is Ribosome maturation factor RimP (Alkaliphilus metalliredigens (strain QYMF)).